The sequence spans 212 residues: Ribonuclease HII (212 aa).

The region spanning 19–212 (CIIVGVDEVG…SKISYMFKNS (194 aa)) is the RNase H type-2 domain. The a divalent metal cation site is built by D25, E26, and D120.

This sequence belongs to the RNase HII family. It depends on Mn(2+) as a cofactor. Requires Mg(2+) as cofactor.

Its subcellular location is the cytoplasm. The catalysed reaction is Endonucleolytic cleavage to 5'-phosphomonoester.. Its function is as follows. Endonuclease that specifically degrades the RNA of RNA-DNA hybrids. The polypeptide is Ribonuclease HII (Ehrlichia ruminantium (strain Welgevonden)).